We begin with the raw amino-acid sequence, 395 residues long: Putative nickel insertion protein (395 aa).

Belongs to the LarC family.

This is Putative nickel insertion protein from Methanopyrus kandleri (strain AV19 / DSM 6324 / JCM 9639 / NBRC 100938).